The following is a 975-amino-acid chain: DNA primase (975 aa).

A CHC2-type zinc finger spans residues 919–958 (CIQHDHRDGRENVQFFLDFRPESATTIWTTLWSRCFSRKC).

Belongs to the herpesviridae DNA primase family. In terms of assembly, associates with the helicase and the primase-associated factor to form the helicase-primase factor.

It is found in the host nucleus. Functionally, essential component of the helicase/primase complex. Unwinds the DNA at the replication forks and generates single-stranded DNA for both leading and lagging strand synthesis. The primase initiates primer synthesis and thereby produces large amount of short RNA primers on the lagging strand that the polymerase elongates using dNTPs. This Elephas maximus (Indian elephant) protein is DNA primase.